The sequence spans 361 residues: Phosphoserine aminotransferase (361 aa).

Arg42 provides a ligand contact to L-glutamate. Pyridoxal 5'-phosphate contacts are provided by residues 76 to 77, Trp102, Thr152, Asp172, and Gln195; that span reads AT. The residue at position 196 (Lys196) is an N6-(pyridoxal phosphate)lysine. 237-238 contributes to the pyridoxal 5'-phosphate binding site; it reads NT.

Belongs to the class-V pyridoxal-phosphate-dependent aminotransferase family. SerC subfamily. Homodimer. Requires pyridoxal 5'-phosphate as cofactor.

Its subcellular location is the cytoplasm. It catalyses the reaction O-phospho-L-serine + 2-oxoglutarate = 3-phosphooxypyruvate + L-glutamate. It carries out the reaction 4-(phosphooxy)-L-threonine + 2-oxoglutarate = (R)-3-hydroxy-2-oxo-4-phosphooxybutanoate + L-glutamate. Its pathway is amino-acid biosynthesis; L-serine biosynthesis; L-serine from 3-phospho-D-glycerate: step 2/3. It functions in the pathway cofactor biosynthesis; pyridoxine 5'-phosphate biosynthesis; pyridoxine 5'-phosphate from D-erythrose 4-phosphate: step 3/5. In terms of biological role, catalyzes the reversible conversion of 3-phosphohydroxypyruvate to phosphoserine and of 3-hydroxy-2-oxo-4-phosphonooxybutanoate to phosphohydroxythreonine. This chain is Phosphoserine aminotransferase, found in Xanthomonas campestris pv. campestris (strain B100).